A 451-amino-acid chain; its full sequence is Phosphoglucosamine mutase (451 aa).

S101 acts as the Phosphoserine intermediate in catalysis. Positions 101, 243, 245, and 247 each coordinate Mg(2+). S101 is modified (phosphoserine).

This sequence belongs to the phosphohexose mutase family. The cofactor is Mg(2+). In terms of processing, activated by phosphorylation.

It carries out the reaction alpha-D-glucosamine 1-phosphate = D-glucosamine 6-phosphate. Catalyzes the conversion of glucosamine-6-phosphate to glucosamine-1-phosphate. This chain is Phosphoglucosamine mutase, found in Thermodesulfovibrio yellowstonii (strain ATCC 51303 / DSM 11347 / YP87).